The sequence spans 435 residues: E3 ubiquitin-protein ligase itt1 (435 aa).

An RWD domain is found at 16-135 (DELIALQSIY…EHVRSIATIA (120 aa)). The interval 170–420 (RKFQCNVCFD…DPVSSCYGML (251 aa)) is TRIAD supradomain. Zn(2+) is bound by residues Cys-174, Cys-177, Cys-192, His-194, Cys-197, Cys-200, Cys-219, Cys-224, Cys-266, Cys-271, Cys-286, Cys-289, Cys-294, Cys-297, His-302, Cys-308, Cys-368, and Cys-371. The RING-type 1 zinc finger occupies 174–224 (CNVCFDEFNGTDCFQLTRCGHVSCQSCLRDYYTMCIQEGMFSQIKCIDLDC). The IBR-type zinc-finger motif lies at 245-308 (TNRYKELEEK…ATWHGDLSPC (64 aa)). An RING-type 2; atypical zinc finger spans residues 368–396 (CPTCDRVVERIDGCCHMNCLCGTHFCFLC). The active site involves Cys-381. Residues Cys-386, Cys-388, Cys-393, Cys-396, His-408, and Cys-416 each coordinate Zn(2+).

The protein belongs to the RBR family. RNF14 subfamily.

It is found in the cytoplasm. The protein resides in the nucleus. The enzyme catalyses [E2 ubiquitin-conjugating enzyme]-S-ubiquitinyl-L-cysteine + [acceptor protein]-L-lysine = [E2 ubiquitin-conjugating enzyme]-L-cysteine + [acceptor protein]-N(6)-ubiquitinyl-L-lysine.. Its pathway is protein modification; protein ubiquitination. Its function is as follows. E3 ubiquitin-protein ligase involved in the rescue of stalled ribosomes by promoting ubiquitination and degradation of proteins on stalled ribosomes. Specifically required to resolve RNA-protein cross-links caused by reactive aldehydes, which trigger translation stress by stalling ribosomes: acts by catalying 'Lys-6'-linked ubiquitination of RNA-protein cross-links, leading to their degradation. The chain is E3 ubiquitin-protein ligase itt1 (itt1) from Schizosaccharomyces pombe (strain 972 / ATCC 24843) (Fission yeast).